Here is a 196-residue protein sequence, read N- to C-terminus: Guanylate kinase (196 aa).

In terms of domain architecture, Guanylate kinase-like spans 7–191; it reads RNIVLLVGPS…AAEEIEKIIL (185 aa). An ATP-binding site is contributed by 14–21; that stretch reads GPSGVGKG.

It belongs to the guanylate kinase family.

The protein localises to the cytoplasm. It catalyses the reaction GMP + ATP = GDP + ADP. Essential for recycling GMP and indirectly, cGMP. This is Guanylate kinase from Mycoplasmopsis pulmonis (strain UAB CTIP) (Mycoplasma pulmonis).